The chain runs to 468 residues: Interleukin-9 receptor (468 aa).

Positions 1 to 37 (MALGRCIAEGWTLERVAVKQVSWFLIYSWVCSGVCRG) are cleaved as a signal peptide. Over 38–270 (VSVPEQGGGG…GLLVPRWQWS (233 aa)) the chain is Extracellular. N116 and N155 each carry an N-linked (GlcNAc...) asparagine glycan. The Fibronectin type-III domain maps to 148–256 (PPSDLQSNVS…WSQPVSFPSP (109 aa)). The short motif at 244–248 (WSEWS) is the WSXWS motif element. A helical membrane pass occupies residues 271 to 291 (ASILVVVPIFLLLTGFVHLLF). Topologically, residues 292 to 468 (KLSPRLKRIF…PVALPVSSRA (177 aa)) are cytoplasmic. Positions 301–309 (FYQNIPSPE) match the Box 1 motif motif. The tract at residues 407 to 426 (PQEDWAPLGSARPPPPDSDS) is disordered.

The protein belongs to the type I cytokine receptor family. Type 4 subfamily. In terms of assembly, interacts with IL9.

Its subcellular location is the cell membrane. The protein localises to the secreted. Its function is as follows. Plays an important role in the immune response against parasites by acting as a receptor of IL9. This chain is Interleukin-9 receptor (Il9r), found in Mus musculus (Mouse).